The sequence spans 876 residues: Protein TORMOZ EMBRYO DEFECTIVE (876 aa).

13 WD repeats span residues 58 to 97, 100 to 139, 142 to 183, 190 to 229, 255 to 294, 308 to 347, 356 to 396, 399 to 441, 444 to 484, 497 to 536, 539 to 580, 581 to 620, and 623 to 662; these read GESDTLTALALSPDDKLLFSAGHSRQIRVWDLETLKCIRS, GHEGPVMGMACHASGGLLATAGADRKVLVWDVDGGFCTHY, GHKG…TEKK, KHFSAVTSIALSEDGLTLFSAGRDKVVNLWDLHDYSCKAT, LDQKKSKKKESDSQATYFITVGERGVVRIWKSEGSICLYE, ESKRGFTAAAMLPSDHGLLCVTADQQFFFYSVVENVEETE, GYNE…CSYV, GHKE…CIGV, GHNG…EDSE, AHDKDINSVAVARNDSLVCTGSEDRTASIWRLPDLVHVVT, GHKR…KTFE, GHTSSVLRASFITDGTQFVSCGADGLLKLWNVNTSECIAT, and QHEDKVWALAVGKKTEMIATGGGDAVINLWHDSTASDKED. The tract at residues 816 to 876 is disordered; sequence VETEYPKDEK…AEAQGSVIAV (61 aa). Over residues 819–831 the composition is skewed to basic and acidic residues; it reads EYPKDEKKKEKDV. The short motif at 848–855 is the Nuclear localization signal element; sequence SRKRKSQK. Over residues 849 to 864 the composition is skewed to basic residues; it reads RKRKSQKSKGKSNKKR.

As to expression, preferentially expressed in dividing cells in a variety of tissues and meristematic regions.

The protein resides in the nucleus. It is found in the nucleolus. Functionally, essential protein involved in the regulation of cell division planes during embryogenesis which defines cell patterning, especially longitudinal division planes of the proembryo, probably via the regulation of embryo patterning genes expression patterns. This Arabidopsis thaliana (Mouse-ear cress) protein is Protein TORMOZ EMBRYO DEFECTIVE.